Here is a 468-residue protein sequence, read N- to C-terminus: Bone morphogenetic protein 3 (468 aa).

An N-terminal signal peptide occupies residues 1–22 (MAGARGLLCLWLGYFCLNLAQG). A propeptide spanning residues 23–358 (QRPNLHLPGL…EQTLKKARRK (336 aa)) is cleaved from the precursor. The interval 29-53 (LPGLRETEPSDRATGGSPSPDLRPH) is disordered. Residues N115, N139, N171, and N216 are each glycosylated (N-linked (GlcNAc...) asparagine). Residues 314–349 (RKPYKSLQTQPPEKSRNKKKQRKGSHQKGQTLQFDE) form a disordered region. Over residues 329–339 (RNKKKQRKGSH) the composition is skewed to basic residues. Residues 340–349 (QKGQTLQFDE) are compositionally biased toward polar residues. 3 cysteine pairs are disulfide-bonded: C366/C433, C395/C465, and C399/C467. Residue N459 is glycosylated (N-linked (GlcNAc...) asparagine).

This sequence belongs to the TGF-beta family. As to quaternary structure, homodimer; disulfide-linked.

The protein resides in the secreted. Negatively regulates bone density. Antagonizes the ability of certain osteogenic BMPs to induce osteoprogenitor differentiation and ossification. The sequence is that of Bone morphogenetic protein 3 (Bmp3) from Mus musculus (Mouse).